A 160-amino-acid chain; its full sequence is S-adenosylmethionine decarboxylase proenzyme (160 aa).

Ser73 acts as the Schiff-base intermediate with substrate; via pyruvic acid in catalysis. Ser73 carries the post-translational modification Pyruvic acid (Ser); by autocatalysis. His78 functions as the Proton acceptor; for processing activity in the catalytic mechanism. The Proton donor; for catalytic activity role is filled by Cys93.

The protein belongs to the prokaryotic AdoMetDC family. Type 1 subfamily. In terms of assembly, heterotetramer of two alpha and two beta chains arranged as a dimer of alpha/beta heterodimers. Pyruvate serves as cofactor. In terms of processing, is synthesized initially as an inactive proenzyme. Formation of the active enzyme involves a self-maturation process in which the active site pyruvoyl group is generated from an internal serine residue via an autocatalytic post-translational modification. Two non-identical subunits are generated from the proenzyme in this reaction, and the pyruvate is formed at the N-terminus of the alpha chain, which is derived from the carboxyl end of the proenzyme. The post-translation cleavage follows an unusual pathway, termed non-hydrolytic serinolysis, in which the side chain hydroxyl group of the serine supplies its oxygen atom to form the C-terminus of the beta chain, while the remainder of the serine residue undergoes an oxidative deamination to produce ammonia and the pyruvoyl group blocking the N-terminus of the alpha chain.

It carries out the reaction S-adenosyl-L-methionine + H(+) = S-adenosyl 3-(methylsulfanyl)propylamine + CO2. The protein operates within amine and polyamine biosynthesis; S-adenosylmethioninamine biosynthesis; S-adenosylmethioninamine from S-adenosyl-L-methionine: step 1/1. Catalyzes the decarboxylation of S-adenosylmethionine to S-adenosylmethioninamine (dcAdoMet), the propylamine donor required for the synthesis of the polyamines spermine and spermidine from the diamine putrescine. This is S-adenosylmethionine decarboxylase proenzyme from Pseudomonas aeruginosa (strain LESB58).